A 585-amino-acid polypeptide reads, in one-letter code: Testis-specific serine kinase substrate (585 aa).

The span at 91 to 108 shows a compositional bias: low complexity; it reads EPDSSGTDSTTEDSGPLA. The tract at residues 91-126 is disordered; the sequence is EPDSSGTDSTTEDSGPLALPGPPASPTTPWAPEDPD. Serine 224, serine 281, and serine 309 each carry phosphoserine. Disordered stretches follow at residues 262–309 and 559–585; these read SRHG…PSLS and LEGSTGAMGGGSTGGAPPKRGGPGSEQ.

In terms of processing, phosphorylated on serine residue(s) by STK22A/TSSK1 and STK22B/TSSK2.

The protein resides in the cytoplasm. Its subcellular location is the cytoskeleton. The protein localises to the microtubule organizing center. It localises to the centrosome. It is found in the centriole. Functionally, may play a role in testicular physiology, most probably in the process of spermatogenesis or spermatid development. This is Testis-specific serine kinase substrate (Tsks) from Rattus norvegicus (Rat).